The following is a 430-amino-acid chain: Enolase (430 aa).

Glutamine 163 lines the (2R)-2-phosphoglycerate pocket. Catalysis depends on glutamate 205, which acts as the Proton donor. Residues aspartate 242, glutamate 287, and aspartate 314 each contribute to the Mg(2+) site. (2R)-2-phosphoglycerate contacts are provided by lysine 339, arginine 368, serine 369, and lysine 390. Catalysis depends on lysine 339, which acts as the Proton acceptor.

Belongs to the enolase family. Mg(2+) is required as a cofactor.

Its subcellular location is the cytoplasm. The protein localises to the secreted. The protein resides in the cell surface. It catalyses the reaction (2R)-2-phosphoglycerate = phosphoenolpyruvate + H2O. It functions in the pathway carbohydrate degradation; glycolysis; pyruvate from D-glyceraldehyde 3-phosphate: step 4/5. Catalyzes the reversible conversion of 2-phosphoglycerate (2-PG) into phosphoenolpyruvate (PEP). It is essential for the degradation of carbohydrates via glycolysis. The sequence is that of Enolase from Geobacillus sp. (strain WCH70).